Consider the following 70-residue polypeptide: Waprin-Thr1 (70 aa).

Positions 1–19 (MKARLLLLSVVILVGMVSA) are cleaved as a signal peptide. One can recognise a WAP domain in the interval 20–70 (ENEKAGSCPDVNQPIPPLGLCRNMCESDSGCPNNEKCCKNGCGFMTCSRPR). 4 cysteine pairs are disulfide-bonded: cysteine 27–cysteine 57, cysteine 40–cysteine 61, cysteine 44–cysteine 56, and cysteine 50–cysteine 66.

This sequence belongs to the venom waprin family. Expressed by the venom gland.

It localises to the secreted. In terms of biological role, damages membranes of susceptible bacteria. Has no hemolytic activity. Not toxic to mice. Does not inhibit the proteinases elastase and cathepsin G. The polypeptide is Waprin-Thr1 (Thrasops jacksonii (Jackson's black tree snake)).